Consider the following 210-residue polypeptide: Glutathione S-transferase P 1 (210 aa).

One can recognise a GST N-terminal domain in the interval 2-81; that stretch reads PPYTIVYFPV…HLGRSLGLYG (80 aa). Residue tyrosine 4 is modified to Phosphotyrosine; by EGFR. Residues tyrosine 8, arginine 14, tryptophan 39, lysine 45, and 52-53 contribute to the glutathione site; that span reads QL. A Phosphothreonine modification is found at threonine 62. 65 to 66 serves as a coordination point for glutathione; that stretch reads QS. The 122-residue stretch at 83 to 204 folds into the GST C-terminal domain; it reads NQREAAQMDM…SSPEHVNRPI (122 aa). 2 positions are modified to N6-succinyllysine: lysine 103 and lysine 116. The residue at position 128 (lysine 128) is an N6-acetyllysine.

In terms of assembly, homodimer. Interacts with CDK5. As to expression, ubiquitously expressed.

It is found in the cytoplasm. It localises to the mitochondrion. The protein localises to the nucleus. The enzyme catalyses RX + glutathione = an S-substituted glutathione + a halide anion + H(+). The catalysed reaction is prostaglandin J2 + glutathione = prostaglandin J2-S-(R)-glutathione. It catalyses the reaction prostaglandin J2 + glutathione = prostaglandin J2-S-(S)-glutathione. It carries out the reaction prostaglandin A2 + glutathione = prostaglandin A2-S-(S)-glutathione. The enzyme catalyses 11(S)-hydroxy-14(S),15(S)-epoxy-(5Z,8Z,12E)-eicosatrienoate + glutathione = (11S,15S)-dihydroxy-14(R)-S-glutathionyl-(5Z,8Z,12E)-eicosatrienoate. Its function is as follows. Conjugation of reduced glutathione to a wide number of exogenous and endogenous hydrophobic electrophiles. Involved in the formation of glutathione conjugates of both prostaglandin A2 (PGA2) and prostaglandin J2 (PGJ2). Participates in the formation of novel hepoxilin regioisomers. Negatively regulates CDK5 activity via p25/p35 translocation to prevent neurodegeneration. This is Glutathione S-transferase P 1 from Mus musculus (Mouse).